Reading from the N-terminus, the 903-residue chain is DNA mismatch repair protein MutS (903 aa).

Residues 1–89 (MPRSASQPPD…DEPAWGHHSQ (89 aa)) form a disordered region. 2 stretches are compositionally biased toward low complexity: residues 20–36 (APEP…SEPE) and 49–62 (ADAA…QATA). 719 to 726 (GPNASGKS) serves as a coordination point for ATP.

The protein belongs to the DNA mismatch repair MutS family.

In terms of biological role, this protein is involved in the repair of mismatches in DNA. It is possible that it carries out the mismatch recognition step. This protein has a weak ATPase activity. The protein is DNA mismatch repair protein MutS of Synechococcus sp. (strain CC9605).